Consider the following 325-residue polypeptide: Aldo-keto reductase family 1 member D1 (325 aa).

NADP(+) contacts are provided by residues 22-26 and Asp-52; that span reads GLGTY. Tyr-26 contacts substrate. 4 residues coordinate substrate: Tyr-57, Trp-88, Glu-119, and Tyr-131. The active-site Proton donor is the Tyr-57. NADP(+) is bound by residues 168 to 169, Gln-192, and 218 to 223; these read SN and HSPLGT. The residue at position 228 (Ser-228) is a Phosphoserine. Position 229 (Trp-229) interacts with substrate. 272–282 is a binding site for NADP(+); sequence KSFTPERIKEN.

Belongs to the aldo/keto reductase family.

The protein localises to the cytoplasm. It carries out the reaction 5beta-cholestan-3-one + NADP(+) = cholest-4-en-3-one + NADPH + H(+). The catalysed reaction is 4,5beta-dihydrocortisone + NADP(+) = cortisone + NADPH + H(+). The enzyme catalyses cortisol + NADPH + H(+) = 5beta-dihydrocortisol + NADP(+). It catalyses the reaction corticosterone + NADPH + H(+) = 5beta-dihydrocorticosterone + NADP(+). It carries out the reaction 7alpha,12alpha-dihydroxycholest-4-en-3-one + NADPH + H(+) = 7alpha,12alpha-dihydroxy-5beta-cholestan-3-one + NADP(+). The catalysed reaction is 7alpha-hydroxycholest-4-en-3-one + NADPH + H(+) = 7alpha-hydroxy-5beta-cholestan-3-one + NADP(+). The enzyme catalyses epitestosterone + NADPH + H(+) = 5beta-dihydroepitestosterone + NADP(+). It catalyses the reaction androst-4-ene-3,17-dione + NADPH + H(+) = 5beta-androstane-3,17-dione + NADP(+). It carries out the reaction progesterone + NADPH + H(+) = 5beta-pregnan-3,20-dione + NADP(+). The catalysed reaction is 21-hydroxyprogesterone + NADPH + H(+) = 5beta-dihydrodeoxycorticosterone + NADP(+). The enzyme catalyses aldosterone + NADPH + H(+) = 5beta-dihydroaldosterone + NADP(+). It catalyses the reaction 17beta-hydroxyandrosta-1,4-dien-3-one + NADPH + H(+) = 17beta-hydroxy-5beta-androst-1-en-3-one + NADP(+). It carries out the reaction 17beta-hydroxyestr-4-en-3-one + NADPH + H(+) = 17beta-hydroxy-5beta-estran-3-one + NADP(+). The catalysed reaction is 5beta-dihydrotestosterone + NADP(+) = testosterone + NADPH + H(+). The enzyme catalyses androst-4-ene-3,11,17-trione + NADPH + H(+) = 17beta-hydroxyandrost-4-ene-3,11-dione + NADP(+). With respect to regulation, subject to inhibition by high substrate concentrations. Inhibited by testosterone concentrations above 10 uM. Inhibited by the primary and secondary bile acids chenodeoxycholic acid and ursodeoxycholic acid. In terms of biological role, catalyzes the stereospecific NADPH-dependent reduction of the C4-C5 double bond of bile acid intermediates and steroid hormones carrying a delta(4)-3-one structure to yield an A/B cis-ring junction. This cis-configuration is crucial for bile acid biosynthesis and plays important roles in steroid metabolism. Capable of reducing a broad range of delta-(4)-3-ketosteroids from C18 (such as, 17beta-hydroxyestr-4-en-3-one) to C27 (such as, 7alpha-hydroxycholest-4-en-3-one). This is Aldo-keto reductase family 1 member D1 (Akr1d1) from Mus musculus (Mouse).